We begin with the raw amino-acid sequence, 346 residues long: Probable 3-hydroxyacyl-CoA dehydrogenase (346 aa).

Residues 322–346 form a disordered region; the sequence is RANLSPSATPCTPWKARKATSCAPP.

Belongs to the 3-hydroxyacyl-CoA dehydrogenase family.

The catalysed reaction is a (3S)-3-hydroxyacyl-CoA + NAD(+) = a 3-oxoacyl-CoA + NADH + H(+). The polypeptide is Probable 3-hydroxyacyl-CoA dehydrogenase (Deinococcus radiodurans (strain ATCC 13939 / DSM 20539 / JCM 16871 / CCUG 27074 / LMG 4051 / NBRC 15346 / NCIMB 9279 / VKM B-1422 / R1)).